Reading from the N-terminus, the 1137-residue chain is Eukaryotic translation initiation factor 3 subunit A (1137 aa).

Positions 319–501 constitute a PCI domain; sequence LQRMAAHVLL…NSIYFGTDLT (183 aa). 2 stretches are compositionally biased toward basic and acidic residues: residues 588–623 and 829–899; these read QNNAREEEEARRQEEESRKAKLAEQKRLEQEQEERE and AAEE…RGGD. Disordered regions lie at residues 588–631 and 829–1137; these read QNNA…QNEI and AAEE…VKRR. Serine 908 is modified (phosphoserine). 4 stretches are compositionally biased toward basic and acidic residues: residues 922–971, 985–1046, 1054–1083, and 1106–1127; these read RGIE…EPDS, SRDE…EPQR, DAPRHADRENRRTAGGERRDRDVRETRGDQ, and AREEKPATKRDQPQEKENKAAD.

It belongs to the eIF-3 subunit A family. In terms of assembly, component of the eukaryotic translation initiation factor 3 (eIF-3) complex. The eIF-3 complex interacts with pix.

The protein localises to the cytoplasm. RNA-binding component of the eukaryotic translation initiation factor 3 (eIF-3) complex, which is involved in protein synthesis of a specialized repertoire of mRNAs and, together with other initiation factors, stimulates binding of mRNA and methionyl-tRNAi to the 40S ribosome. The eIF-3 complex specifically targets and initiates translation of a subset of mRNAs involved in cell proliferation. In Drosophila yakuba (Fruit fly), this protein is Eukaryotic translation initiation factor 3 subunit A.